We begin with the raw amino-acid sequence, 392 residues long: Probable glycerol-3-phosphate dehydrogenase 2 (392 aa).

NAD(+)-binding positions include 42–47 (GSGNWG), Phe130, Lys153, and Ala196. Residue Lys153 participates in substrate binding. Lys248 acts as the Proton acceptor in catalysis. Positions 312 and 341 each coordinate NAD(+). Residue 312 to 313 (RN) coordinates substrate.

The protein belongs to the NAD-dependent glycerol-3-phosphate dehydrogenase family. In terms of assembly, homodimer.

The protein localises to the cytoplasm. The enzyme catalyses sn-glycerol 3-phosphate + NAD(+) = dihydroxyacetone phosphate + NADH + H(+). This is Probable glycerol-3-phosphate dehydrogenase 2 (gpdh-2) from Caenorhabditis elegans.